A 141-amino-acid polypeptide reads, in one-letter code: Large ribosomal subunit protein uL11 (141 aa).

It belongs to the universal ribosomal protein uL11 family. As to quaternary structure, part of the ribosomal stalk of the 50S ribosomal subunit. Interacts with L10 and the large rRNA to form the base of the stalk. L10 forms an elongated spine to which L12 dimers bind in a sequential fashion forming a multimeric L10(L12)X complex. Post-translationally, one or more lysine residues are methylated.

In terms of biological role, forms part of the ribosomal stalk which helps the ribosome interact with GTP-bound translation factors. This Synechocystis sp. (strain ATCC 27184 / PCC 6803 / Kazusa) protein is Large ribosomal subunit protein uL11.